The chain runs to 476 residues: Bifunctional protein HldE (476 aa).

The ribokinase stretch occupies residues 1–319 (MKITLPEYDK…ANAVYSQQEI (319 aa)). 196–199 (NLAE) serves as a coordination point for ATP. The active site involves D265. Residues 345-476 (MTNGCFDILH…EIIKTIRNNS (132 aa)) are cytidylyltransferase.

It in the N-terminal section; belongs to the carbohydrate kinase PfkB family. The protein in the C-terminal section; belongs to the cytidylyltransferase family. In terms of assembly, homodimer.

It catalyses the reaction D-glycero-beta-D-manno-heptose 7-phosphate + ATP = D-glycero-beta-D-manno-heptose 1,7-bisphosphate + ADP + H(+). The catalysed reaction is D-glycero-beta-D-manno-heptose 1-phosphate + ATP + H(+) = ADP-D-glycero-beta-D-manno-heptose + diphosphate. Its pathway is nucleotide-sugar biosynthesis; ADP-L-glycero-beta-D-manno-heptose biosynthesis; ADP-L-glycero-beta-D-manno-heptose from D-glycero-beta-D-manno-heptose 7-phosphate: step 1/4. The protein operates within nucleotide-sugar biosynthesis; ADP-L-glycero-beta-D-manno-heptose biosynthesis; ADP-L-glycero-beta-D-manno-heptose from D-glycero-beta-D-manno-heptose 7-phosphate: step 3/4. Catalyzes the phosphorylation of D-glycero-D-manno-heptose 7-phosphate at the C-1 position to selectively form D-glycero-beta-D-manno-heptose-1,7-bisphosphate. Functionally, catalyzes the ADP transfer from ATP to D-glycero-beta-D-manno-heptose 1-phosphate, yielding ADP-D-glycero-beta-D-manno-heptose. This Psychromonas ingrahamii (strain DSM 17664 / CCUG 51855 / 37) protein is Bifunctional protein HldE.